Consider the following 157-residue polypeptide: Ribosome maturation factor RimP (157 aa).

It belongs to the RimP family.

The protein resides in the cytoplasm. In terms of biological role, required for maturation of 30S ribosomal subunits. In Bacillus licheniformis (strain ATCC 14580 / DSM 13 / JCM 2505 / CCUG 7422 / NBRC 12200 / NCIMB 9375 / NCTC 10341 / NRRL NRS-1264 / Gibson 46), this protein is Ribosome maturation factor RimP.